The following is a 1209-amino-acid chain: MPKDSSEHQKSPSRFTRSMFVDPRAFVRRSVSPVDQLCHSVADLRFVSSNTETLESRLQALSKKFDNGSENHGQDTDTVEDVAKTQYMAKSFAGLIATASMYVGINELGDKEENDEDELELMNDAASVLDTSSQANQTLFEVSIEMNADAISQISTDSKSRKELIRERLIKKFLPNDDEKYIEEYPCWLLRDIMIQGHAYLTNKHLFFFAFIPNFESDFNVTGSLRLISGHVLSKSHRYWVVLKGHTLSFHNSSTDLYFPLLTIDLRDISSVQMTSSENNPTKFELSIKDQSLVLKADSFHSARHWVSSIKKQMFASQHSDTNTMTIKIPLQNIVDLEETSILDKSGTLRIKALENLSTYAVDEYFFVFFKGNANAMKQKVNSLLKDLEMNGSQILVNFNKVDSPLGINEKLPDLNYDDPSNENNLVDDADINSAETDTLSPGTMQSALTLQQTSSAFSPRHSAYPRKVKKKLKSMAGSLKLGSPSKFTKLEDDIIIEHYSPGLINDQTIDYDKDSKSIISRLTPKKFQNVPLMWAADPVHFNSDDGIVFPLDDKYTADADISNQSNVRFRQHFSFDETANLVASYHGYLNRNVPIYGKIYISDKNICFRSLLPGVSTKTVLPLEDVENCYKETRFRFGYFGLVIVIHGHEELFLEFGNKNARDDCEFVMIKVMDAVSSHRSTLKRKSTAEVVHRLSEAASLKLLEEKISEQGFDIPLIVEKNPYFTTVIKPSKSYKFGLLTIGSRGDVQPYIALAKGLQAEGHEVIILTHGEFKDWIVSHNIGFREISGNPAELISLMVQHGSMNMGLLRDASTNFSTWISSLLDTAWEGCQGIDILIESPSAMAGIHIAEALRIPYFRAFTMPWTRTRAYPHAFIVPDQKRGGNYNYFTHVLFENIFWKGISGKVNEWRETKLKLPKTNLVSMQQNRVPFLYNVSPIVFPPSVDFNEWIKVTGYWFLDEKRSYKPPAEFMEFLNKARELKKKVVYIGFGSIVVNDPEKMTDTIIEAVRDAGVYCVLNKGWSNRFGDPLAKKIDKELPSYIYNSGDVPHDWLFTKIDATVHHGGSGTTGASLRAGLPTIIKPFFGDQFFYASRVEDIGAGVALKKLNRSSLAKALKEVTTNTRIIQKARQIGESISKEHGVATAIGAIYSELGYARSLIKTKNPVDDKEMEAASTKLSNDAVVTAKGNEKEEYSSEGSGSNDGSWLLI.

A GRAM 1 domain is found at 167–217 (ERLIKKFLPNDDEKYIEEYPCWLLRDIMIQGHAYLTNKHLFFFAFIPNFES). Residues 218 to 315 (DFNVTGSLRL…WVSSIKKQMF (98 aa)) form the PH domain. One can recognise a GRAM 2 domain in the interval 568–634 (VRFRQHFSFD…EDVENCYKET (67 aa)). UDP-alpha-D-glucose contacts are provided by S745, R746, D748, N1019, V1048, H1050, H1063, S1066, G1067, T1068, D1087, and Q1088. The tract at residues 1186–1209 (AKGNEKEEYSSEGSGSNDGSWLLI) is disordered. Positions 1196 to 1209 (SEGSGSNDGSWLLI) are enriched in low complexity.

It belongs to the glycosyltransferase 28 family.

It is found in the cytoplasm. The protein resides in the membrane. The enzyme catalyses a sterol + UDP-alpha-D-glucose = a sterol 3-beta-D-glucoside + UDP + H(+). It catalyses the reaction ergosterol + UDP-alpha-D-glucose = ergosteryl 3-beta-D-glucoside + UDP + H(+). Its function is as follows. Sterol glycosyltransferase responsible for the glycosylation of ergosterol to form ergosterol-glucoside. The protein is Sterol 3-beta-glucosyltransferase of Kluyveromyces lactis (strain ATCC 8585 / CBS 2359 / DSM 70799 / NBRC 1267 / NRRL Y-1140 / WM37) (Yeast).